Consider the following 104-residue polypeptide: Zinc-containing ferredoxin-1 (104 aa).

An N-terminal extension region spans residues 2–37; that stretch reads GIDPNYRTNRQVVGEHSGHKVYGPVEPPKVLGIHGT. Residues His17 and His20 each contribute to the Zn(2+) site. Lys30 carries the N6-methyllysine modification. Residue His35 participates in Zn(2+) binding. 4Fe-4S ferredoxin-type domains lie at 38-66 and 75-104; these read IVGVDFDLCIADGSCINACPVNVFQWYDT and KADPVNEQACIFCMACVNVCPVAAIDVKPP. The [3Fe-4S] cluster site is built by Cys46 and Cys52. Cys56 provides a ligand contact to [4Fe-4S] cluster. Asp77 is a Zn(2+) binding site. Residues Cys84, Cys87, and Cys90 each coordinate [4Fe-4S] cluster. Cys94 provides a ligand contact to [3Fe-4S] cluster.

Requires [3Fe-4S] cluster as cofactor. [4Fe-4S] cluster serves as cofactor. Zn(2+) is required as a cofactor.

In terms of biological role, ferredoxins are iron-sulfur proteins that transfer electrons in a wide variety of metabolic reactions. The protein is Zinc-containing ferredoxin-1 (zfx1) of Sulfurisphaera tokodaii (strain DSM 16993 / JCM 10545 / NBRC 100140 / 7) (Sulfolobus tokodaii).